Here is a 299-residue protein sequence, read N- to C-terminus: Taste receptor type 2 member 5 (299 aa).

Residue methionine 1 is a topological domain, extracellular. A helical transmembrane segment spans residues 2-22 (LSAGLGLLMLVAVIEFLIGLI). Residues 23 to 45 (GNGILVVWSLREWIRKFSWSSYN) are Cytoplasmic-facing. A helical transmembrane segment spans residues 46 to 66 (LIILGLAGCRFLLQWLIILDL). Over 67–82 (SLFPLFQSSSWLRYLN) the chain is Extracellular. Residues 83–103 (VFWVLVSQASLWFATFLSVFY) form a helical membrane-spanning segment. Residues 104–127 (CKKITTFDRPAYLWLKQRAYNLSL) are Cytoplasmic-facing. Residues 128–148 (WCLLGYFIISLLLTVQVGLTV) form a helical membrane-spanning segment. The Extracellular portion of the chain corresponds to 149–175 (HHPPQGNSSIRYPFEHWQYLYVFQLNS). The N-linked (GlcNAc...) asparagine glycan is linked to asparagine 155. The chain crosses the membrane as a helical span at residues 176–196 (GSYLPLMVFLVSSGMLIISLY). The Cytoplasmic portion of the chain corresponds to 197–223 (THHKKMKVHSAGRRDARAKAHITALKS). A helical transmembrane segment spans residues 224–244 (LGCFLLLHLVYIVASPFSITS). Topologically, residues 245-253 (KTYPPDLTS) are extracellular. Residues 254–274 (VFIWETLMAAYPSLHSLMLIM) form a helical membrane-spanning segment. At 275 to 299 (GIPRVKQTCQKILWKTVCARRCWGP) the chain is on the cytoplasmic side.

Belongs to the G-protein coupled receptor T2R family.

The protein resides in the membrane. Functionally, receptor that may play a role in the perception of bitterness and is gustducin-linked. May play a role in sensing the chemical composition of the gastrointestinal content. The activity of this receptor may stimulate alpha gustducin, mediate PLC-beta-2 activation and lead to the gating of TRPM5. The sequence is that of Taste receptor type 2 member 5 (TAS2R5) from Papio hamadryas (Hamadryas baboon).